The sequence spans 61 residues: Conotoxin Vn5.3 (61 aa).

An N-terminal signal peptide occupies residues 1-19; sequence MRCLPVFVILLLLIASAPG. Positions 20–50 are excised as a propeptide; sequence VDVQPKTKYYVPRASRRDFAKKTPKRLSKLR.

The protein belongs to the conotoxin T superfamily. Contains 2 disulfide bonds that can be either 'C1-C3, C2-C4' or 'C1-C4, C2-C3', since these disulfide connectivities have been observed for conotoxins with cysteine framework V (for examples, see AC P0DQQ7 and AC P81755). Expressed by the venom duct.

The protein resides in the secreted. This is Conotoxin Vn5.3 from Conus ventricosus (Mediterranean cone).